The following is a 512-amino-acid chain: Tyrosine-protein kinase Lyn (512 aa).

The segment at 1 to 45 (MGCIKSKRKDNLNDDEVDSKTQPVRNTDRTIYVRDPTSNKQQRPV) is disordered. G2 is lipidated: N-myristoyl glycine. C3 carries the S-palmitoyl cysteine lipid modification. S19 is subject to Phosphoserine. The SH3 domain occupies 63–123 (EQGDIVVALY…PSNYVAKVNT (61 aa)). An SH2 domain is found at 129–226 (WFFKDITRKD…GLCRRLEKAC (98 aa)). Position 193 is a phosphotyrosine (Y193). S228 is subject to Phosphoserine. The Protein kinase domain maps to 247–501 (IKLVKKLGAG…YLQSVLDDFY (255 aa)). Residues 253–261 (LGAGQFGEV) and K275 each bind ATP. Phosphotyrosine is present on residues Y306 and Y316. The Proton acceptor role is filled by D367. The residue at position 397 (Y397) is a Phosphotyrosine; by autocatalysis. 2 positions are modified to phosphotyrosine: Y460 and Y473. Y508 is modified (phosphotyrosine; by autocatalysis, CSK and MATK).

This sequence belongs to the protein kinase superfamily. Tyr protein kinase family. SRC subfamily. Interacts with TEC. Interacts (via SH2 domain) with FLT3 (tyrosine phosphorylated). Interacts with LIME1 and with CD79A upon activation of the B-cell antigen receptor. Interacts with the B-cell receptor complex. Interacts with phosphorylated THEMIS2. Interacts with EPOR. Interacts with MS4A2/FCER1B. Interaction (via the SH2 and SH3 domains) with MUC1 is stimulated by IL7 and the subsequent phosphorylation increases the binding between MUC1 and CTNNB1/beta-catenin. Interacts with ADAM15. Interacts with NDFIP2 and more weakly with NDFIP1. Interacts with FASLG. Interacts with KIT. Interacts with HCLS1. Interacts with FCGR2B. Interacts with FCGR1A; the interaction may be indirect. Interacts with CD19, CD22, CD79A and CD79B. Interacts (via SH3 domain) with CBLC, PPP1R15A and PDE4A. Interacts with TGFB1I1. Interacts (via SH3 domain) with PIK3R1, the regulatory subunit of phosphatidylinositol 3-kinase; this interaction enhances phosphatidylinositol 3-kinase activity. Interacts with CSF2RB, the common subunit of the IL3, IL5 and CSF2 receptors. Interacts with PAG1; identified in a complex with PAG1 and STAT3. Interacts with ABL1. Interacts with PTPN6/SHP-1. Interacts (via SH3 domain) with SCIMP (via proline-rich region). This interaction facilitates the phosphorylation of SCIMP on 'Tyr-96', which enhances binding of SCIMP to TLR4, and consequently the phosphorylation of TLR4 in response to stimulation by lipopolysaccharide in macrophages. Interacts with LPXN (via LD motif 3) and the interaction is induced upon B-cell antigen receptor (BCR) activation. Interacts (via SH3-domain) with ANKRD54 (via ankyrin repeat region) in an activation-independent status of LYN. Forms a multiprotein complex with ANKRD54 and HCLS1. Interacts (via SH2 and SH3 domains) with UNC119; leading to LYN activation. Interacts with CD36. Interacts with LYN. Interacts with SKAP1 and FYB1; this interaction promotes the phosphorylation of CLNK. Interacts with BCAR1/CAS and NEDD9/HEF1. Ubiquitinated by CBL, leading to its degradation. In terms of processing, autophosphorylated. Phosphorylated on tyrosine residues in response to KIT signaling. Phosphorylation at Tyr-397 is required for optimal activity. Phosphorylation at Tyr-508 inhibits kinase activity. Phosphorylated at Tyr-508 by CSK. Dephosphorylated by PTPRC/CD45. Becomes rapidly phosphorylated upon activation of the B-cell receptor and the immunoglobulin receptor FCGR1A. Phosphorylated in response to ITGB1 in B-cells. As to expression, detected in bone marrow-derived monocytes and macrophages (at protein level). Expressed predominantly in B-lymphoid and myeloid cells.

Its subcellular location is the cell membrane. It is found in the nucleus. It localises to the cytoplasm. The protein localises to the perinuclear region. The protein resides in the golgi apparatus. Its subcellular location is the membrane. The catalysed reaction is L-tyrosyl-[protein] + ATP = O-phospho-L-tyrosyl-[protein] + ADP + H(+). With respect to regulation, subject to autoinhibition, mediated by intramolecular interactions between the SH2 domain and the C-terminal phosphotyrosine. Phosphorylation at Tyr-397 is required for optimal activity. Phosphorylated by CSK at Tyr-508; phosphorylation at Tyr-508 inhibits kinase activity. Kinase activity is modulated by dephosphorylation by PTPRC/CD45. Inhibited by dasatinib, PP2, and SU6656. In terms of biological role, non-receptor tyrosine-protein kinase that transmits signals from cell surface receptors and plays an important role in the regulation of innate and adaptive immune responses, hematopoiesis, responses to growth factors and cytokines, integrin signaling, but also responses to DNA damage and genotoxic agents. Functions primarily as negative regulator, but can also function as activator, depending on the context. Required for the initiation of the B-cell response, but also for its down-regulation and termination. Plays an important role in the regulation of B-cell differentiation, proliferation, survival and apoptosis, and is important for immune self-tolerance. Acts downstream of several immune receptors, including the B-cell receptor, CD79A, CD79B, CD5, CD19, CD22, FCER1, FCGR2, FCGR1A, TLR2 and TLR4. Plays a role in the inflammatory response to bacterial lipopolysaccharide. Mediates the responses to cytokines and growth factors in hematopoietic progenitors, platelets, erythrocytes, and in mature myeloid cells, such as dendritic cells, neutrophils and eosinophils. Acts downstream of EPOR, KIT, MPL, the chemokine receptor CXCR4, as well as the receptors for IL3, IL5 and CSF2. Plays an important role in integrin signaling. Regulates cell proliferation, survival, differentiation, migration, adhesion, degranulation, and cytokine release. Involved in the regulation of endothelial activation, neutrophil adhesion and transendothelial migration. Down-regulates signaling pathways by phosphorylation of immunoreceptor tyrosine-based inhibitory motifs (ITIM), that then serve as binding sites for phosphatases, such as PTPN6/SHP-1, PTPN11/SHP-2 and INPP5D/SHIP-1, that modulate signaling by dephosphorylation of kinases and their substrates. Phosphorylates LIME1 in response to CD22 activation. Phosphorylates BTK, CBL, CD5, CD19, CD72, CD79A, CD79B, CSF2RB, DOK1, HCLS1, MS4A2/FCER1B, SYK and TEC. Phosphorylates PIRB at Tyr-794 and Tyr-824, which is required for PIRB interaction with PTPN6/SHP-1 and PTPN11/SHP-2. Promotes phosphorylation of SIRPA, PTPN6/SHP-1, PTPN11/SHP-2 and INPP5D/SHIP-1. Required for rapid phosphorylation of FER in response to FCER1 activation. Mediates KIT phosphorylation. Acts as an effector of EPOR (erythropoietin receptor) in controlling KIT expression and may play a role in erythroid differentiation during the switch between proliferation and maturation. Depending on the context, activates or inhibits several signaling cascades. Regulates phosphatidylinositol 3-kinase activity and AKT1 activation. Regulates activation of the MAP kinase signaling cascade, including activation of MAP2K1/MEK1, MAPK1/ERK2, MAPK3/ERK1, MAPK8/JNK1 and MAPK9/JNK2. Mediates activation of STAT5A and/or STAT5B. Phosphorylates LPXN on 'Tyr-72'. Kinase activity facilitates TLR4-TLR6 heterodimerization and signal initiation. Phosphorylates SCIMP on 'Tyr-96'; this enhances binding of SCIMP to TLR4, promoting the phosphorylation of TLR4, and a selective cytokine response to lipopolysaccharide in macrophages. Phosphorylates CLNK. Phosphorylates BCAR1/CAS and NEDD9/HEF1. The sequence is that of Tyrosine-protein kinase Lyn (Lyn) from Mus musculus (Mouse).